The following is a 561-amino-acid chain: Putative ABC transporter ATP-binding protein SAV_5847 (561 aa).

The ABC transporter 1 domain maps to 2-243 (IRFEDVSVTY…SPVYPPVVDL (242 aa)). Residue 36 to 43 (GPSGVGKS) coordinates ATP. The interval 268–299 (ERLAATETPTPTATATATAAPAPSPSRPRRPR) is disordered. A compositionally biased stretch (low complexity) spans 272–288 (ATETPTPTATATATAAP). The ABC transporter 2 domain maps to 315-543 (AAVEALAVRR…SPSFAPQVTK (229 aa)). 347–354 (GRNGAGKS) serves as a coordination point for ATP.

This sequence belongs to the ABC transporter superfamily.

The protein localises to the cell membrane. Its function is as follows. Probably part of an ABC transporter complex. Responsible for energy coupling to the transport system. The sequence is that of Putative ABC transporter ATP-binding protein SAV_5847 from Streptomyces avermitilis (strain ATCC 31267 / DSM 46492 / JCM 5070 / NBRC 14893 / NCIMB 12804 / NRRL 8165 / MA-4680).